A 960-amino-acid polypeptide reads, in one-letter code: Probable glutamyl endopeptidase, chloroplastic (960 aa).

A chloroplast-targeting transit peptide spans 1-62; the sequence is MMRFHKACHR…FSENPLTTVM (62 aa). Residues 78–98 form a disordered region; that stretch reads SGGAEDGGGTSNGSLSASATA. The span at 89 to 98 shows a compositional bias: polar residues; the sequence is NGSLSASATA. Residues Ser-780, Asp-854, and His-888 each act as charge relay system in the active site. Residues 915 to 960 are disordered; the sequence is TSDADTSPDQSKEGSDSADKVSTGTGGGNPEFGEHEVHSKLRRSLL. A compositionally biased stretch (basic and acidic residues) spans 924-933; it reads QSKEGSDSAD.

Belongs to the peptidase S9D family.

The protein localises to the plastid. The protein resides in the chloroplast stroma. Functionally, serine-type protease active in vitro against the LHCII N-terminal. Cleaves its substrate on the carboxy-side of Glu residues. The polypeptide is Probable glutamyl endopeptidase, chloroplastic (GEP) (Arabidopsis thaliana (Mouse-ear cress)).